Here is a 126-residue protein sequence, read N- to C-terminus: UPF0102 protein TP_0913 (126 aa).

It belongs to the UPF0102 family.

This chain is UPF0102 protein TP_0913, found in Treponema pallidum (strain Nichols).